We begin with the raw amino-acid sequence, 339 residues long: Fructose-1,6-bisphosphatase class 1 (339 aa).

Mg(2+) is bound by residues Glu91, Asp113, Leu115, and Asp116. Substrate is bound by residues 116–119 (DGSS), Asn208, and Lys274. Residue Glu280 participates in Mg(2+) binding.

Belongs to the FBPase class 1 family. In terms of assembly, homotetramer. The cofactor is Mg(2+).

The protein resides in the cytoplasm. The catalysed reaction is beta-D-fructose 1,6-bisphosphate + H2O = beta-D-fructose 6-phosphate + phosphate. It functions in the pathway carbohydrate biosynthesis; gluconeogenesis. This chain is Fructose-1,6-bisphosphatase class 1, found in Cupriavidus pinatubonensis (strain JMP 134 / LMG 1197) (Cupriavidus necator (strain JMP 134)).